The primary structure comprises 231 residues: Large ribosomal subunit protein uL1 (231 aa).

This sequence belongs to the universal ribosomal protein uL1 family. As to quaternary structure, part of the 50S ribosomal subunit.

Its function is as follows. Binds directly to 23S rRNA. The L1 stalk is quite mobile in the ribosome, and is involved in E site tRNA release. In terms of biological role, protein L1 is also a translational repressor protein, it controls the translation of the L11 operon by binding to its mRNA. This Methylocella silvestris (strain DSM 15510 / CIP 108128 / LMG 27833 / NCIMB 13906 / BL2) protein is Large ribosomal subunit protein uL1.